The primary structure comprises 181 residues: Ribosome-recycling factor (181 aa).

Residues 135–160 (MDDIKKDKDMPEDDARKAEDQTQKLT) are disordered.

It belongs to the RRF family.

It is found in the cytoplasm. Responsible for the release of ribosomes from messenger RNA at the termination of protein biosynthesis. May increase the efficiency of translation by recycling ribosomes from one round of translation to another. This is Ribosome-recycling factor from Leuconostoc mesenteroides subsp. mesenteroides (strain ATCC 8293 / DSM 20343 / BCRC 11652 / CCM 1803 / JCM 6124 / NCDO 523 / NBRC 100496 / NCIMB 8023 / NCTC 12954 / NRRL B-1118 / 37Y).